A 239-amino-acid chain; its full sequence is Tetraspanin-9 (239 aa).

Helical transmembrane passes span Phe14–Leu34, Leu56–Ile76, and Phe86–Val106. N-linked (GlcNAc...) asparagine glycans are attached at residues Asn180 and Asn181. The helical transmembrane segment at Val204–Met224 threads the bilayer.

This sequence belongs to the tetraspanin (TM4SF) family. As to quaternary structure, found in a complex with GP6. In terms of processing, glycosylated.

Its subcellular location is the membrane. This Ovis aries (Sheep) protein is Tetraspanin-9 (TSPAN9).